The chain runs to 310 residues: Haloalkane dehalogenase (310 aa).

Residues 49-295 form the AB hydrolase-1 domain; that stretch reads VFLCLHGEPT…DAGHFVQEFG (247 aa). The Nucleophile role is filled by aspartate 124. Positions 125 and 175 each coordinate chloride. Aspartate 260 (proton donor) is an active-site residue. Histidine 289 functions as the Proton acceptor in the catalytic mechanism.

This sequence belongs to the haloalkane dehalogenase family. Type 1 subfamily. Monomer.

The catalysed reaction is 1-haloalkane + H2O = a halide anion + a primary alcohol + H(+). It catalyses the reaction 1,2-dichloroethane + H2O = 2-chloroethanol + chloride + H(+). Its pathway is xenobiotic degradation; 1,2-dichloroethane degradation; glycolate from 1,2-dichloroethane: step 1/4. Inhibited by thiol reagents such as p-chloromercuribenzoate and iodoacetamide. Functionally, catalyzes hydrolytic cleavage of carbon-halogen bonds in halogenated aliphatic compounds, leading to the formation of the corresponding primary alcohols, halide ions and protons. Has a broad substrate specificity, which includes terminally mono- and di- chlorinated and brominated alkanes (up to C4 only). The highest activity was found with 1,2-dichloroethane, 1,3-dichloropropane, and 1,2-dibromoethane. The sequence is that of Haloalkane dehalogenase (dhlA) from Xanthobacter autotrophicus.